The following is a 195-amino-acid chain: BAG family molecular chaperone regulator 1A (195 aa).

Residues 6–72 enclose the Ubiquitin-like domain; the sequence is STVTIHYGNQ…KLGLKNHSKI (67 aa). Residues 78-98 are disordered; sequence HKQQRGSKEKDTVEPAPKAEA. Residues 83 to 98 show a composition bias toward basic and acidic residues; sequence GSKEKDTVEPAPKAEA. A BAG domain is found at 109 to 190; sequence EIKAIDQYVD…KMLDHVDQTS (82 aa).

In terms of assembly, binds to the ATPase domain of HSP70/HSC chaperones.

In terms of biological role, inhibits the chaperone activity of HSP70/HSC70 by promoting substrate release. The polypeptide is BAG family molecular chaperone regulator 1A (bag101) (Schizosaccharomyces pombe (strain 972 / ATCC 24843) (Fission yeast)).